A 616-amino-acid polypeptide reads, in one-letter code: Chaperone protein HscA (616 aa).

This sequence belongs to the heat shock protein 70 family.

Functionally, chaperone involved in the maturation of iron-sulfur cluster-containing proteins. Has a low intrinsic ATPase activity which is markedly stimulated by HscB. Involved in the maturation of IscU. This Escherichia coli O6:H1 (strain CFT073 / ATCC 700928 / UPEC) protein is Chaperone protein HscA.